Reading from the N-terminus, the 248-residue chain is Adenosylcobinamide-GDP ribazoletransferase (248 aa).

Transmembrane regions (helical) follow at residues 36–56, 59–79, 114–134, 137–157, 170–190, and 199–219; these read FFLP…YLGL, FLPA…VTGG, GTIA…SLVL, YSIA…FLCL, IFIG…ILAL, and ATII…LLCL.

This sequence belongs to the CobS family. Mg(2+) serves as cofactor.

The protein localises to the cell membrane. It catalyses the reaction alpha-ribazole + adenosylcob(III)inamide-GDP = adenosylcob(III)alamin + GMP + H(+). The catalysed reaction is alpha-ribazole 5'-phosphate + adenosylcob(III)inamide-GDP = adenosylcob(III)alamin 5'-phosphate + GMP + H(+). It functions in the pathway cofactor biosynthesis; adenosylcobalamin biosynthesis; adenosylcobalamin from cob(II)yrinate a,c-diamide: step 7/7. In terms of biological role, joins adenosylcobinamide-GDP and alpha-ribazole to generate adenosylcobalamin (Ado-cobalamin). Also synthesizes adenosylcobalamin 5'-phosphate from adenosylcobinamide-GDP and alpha-ribazole 5'-phosphate. This chain is Adenosylcobinamide-GDP ribazoletransferase, found in Clostridium botulinum (strain Kyoto / Type A2).